A 425-amino-acid chain; its full sequence is Formyl-CoA:oxalate CoA-transferase (425 aa).

Residues 17-18 (QS), Arg-38, 72-75 (LDTK), 96-98 (NFG), Arg-104, and 136-139 (KVYE) each bind CoA. Asp-168 acts as the Nucleophile in catalysis. 247-249 (GGQ) serves as a coordination point for substrate.

It belongs to the CoA-transferase III family. Frc subfamily. Homodimer.

The catalysed reaction is formyl-CoA + oxalate = oxalyl-CoA + formate. Its pathway is metabolic intermediate degradation; oxalate degradation; CO(2) and formate from oxalate: step 1/2. Functionally, involved in the catabolism of oxalate and in the adapatation to low pH via the induction of the oxalate-dependent acid tolerance response (ATR). Catalyzes the transfer of the CoA moiety from formyl-CoA to oxalate. This Rhodopseudomonas palustris (strain BisA53) protein is Formyl-CoA:oxalate CoA-transferase.